We begin with the raw amino-acid sequence, 459 residues long: MGKDKLHVNVVVIGHVDSGKSTTTGHLIYKCGGIDKRTIEKFEKEAQELGKSSFKYAWVLDKLKAERERGITIDIALWKFETPRYQVTVIDAPGHRDFIKNMITGTSQADCAILIIATGIGEFEAGISKDGQTREHALLAFTLGVRQLIVACNKMDTCKWSEDRFNEIVKETNGFIKKVGYNPKAVPFVPISGWHGDNMLEETTNMPWYKGWTKETKSGVSKGKTLLEAIDAIEPPTRPTDKPLRLPLQDVYKIGGIGTVPVGRVETGVIKAGMVVKFAPTNVTTEVKSVEMHHEQIPEGLPGDNVGFNVKNVSIKDIRRGNVCGDSKNDPPMEAASFNAQVIVLNHPGQIGAGYTPVLDCHTAHIACKFAELIEKIDRRTGKVMEAAPKFVKSGDAAIVKLVAQKPLCVETYADYPPLGRFAVRDMRQTVAVGVIKSVDKTEKGGKVTKAAEKAAKKK.

Gly-2 is modified (n,N,N-trimethylglycine). N6,N6-dimethyllysine; alternate is present on Lys-3. N6-methyllysine; alternate is present on Lys-3. The 236-residue stretch at 5-240 (KLHVNVVVIG…DAIEPPTRPT (236 aa)) folds into the tr-type G domain. The segment at 14 to 21 (GHVDSGKS) is G1. 14-21 (GHVDSGKS) is a GTP binding site. Residue Lys-30 is modified to N6-methyllysine. A G2 region spans residues 70–74 (GITID). Position 79 is an N6,N6,N6-trimethyllysine (Lys-79). The tract at residues 91–94 (DAPG) is G3. Residues 91–95 (DAPGH) and 153–156 (NKMD) contribute to the GTP site. The interval 153–156 (NKMD) is G4. A G5 region spans residues 192–194 (SGW). An N6,N6-dimethyllysine; alternate modification is found at Lys-316. Lys-316 bears the N6-methyllysine; alternate mark. Lys-390 is subject to N6-methyllysine.

It belongs to the TRAFAC class translation factor GTPase superfamily. Classic translation factor GTPase family. EF-Tu/EF-1A subfamily.

It localises to the cytoplasm. This protein promotes the GTP-dependent binding of aminoacyl-tRNA to the A-site of ribosomes during protein biosynthesis. The chain is Elongation factor 1-alpha (TEF1) from Cryptococcus neoformans var. neoformans serotype D (strain B-3501A) (Filobasidiella neoformans).